The following is a 372-amino-acid chain: Cyclin-J (372 aa).

Residues 15-143 (DIHQALRYKE…LLETFQWNLC (129 aa)) enclose the Cyclin N-terminal domain.

This sequence belongs to the cyclin family.

In Homo sapiens (Human), this protein is Cyclin-J (CCNJ).